Consider the following 191-residue polypeptide: Ion-translocating oxidoreductase complex subunit B (191 aa).

The segment at 1 to 26 (MSSLWIAIAAVSAIALVSGLILGFAA) is hydrophobic. The region spanning 32 to 90 (EADPIVERIDALLPQSQCGQCGYPGCRPYAEAVANGEKINRCAPGGEAVMRNIAALLAV) is the 4Fe-4S domain. Residues Cys49, Cys52, Cys57, Cys73, Cys116, Cys119, Cys122, Cys126, Cys146, Cys149, Cys152, and Cys156 each coordinate [4Fe-4S] cluster. 4Fe-4S ferredoxin-type domains follow at residues 107–136 (QVALIDEANCIGCTKCIQSCPVDAIVGATR) and 137–166 (ALHTVISDQCTGCGLCLPPCPTSCIQLVPV).

The protein belongs to the 4Fe4S bacterial-type ferredoxin family. RnfB subfamily. As to quaternary structure, the complex is composed of six subunits: RnfA, RnfB, RnfC, RnfD, RnfE and RnfG. It depends on [4Fe-4S] cluster as a cofactor.

The protein localises to the cell inner membrane. Part of a membrane-bound complex that couples electron transfer with translocation of ions across the membrane. The sequence is that of Ion-translocating oxidoreductase complex subunit B from Edwardsiella ictaluri (strain 93-146).